We begin with the raw amino-acid sequence, 549 residues long: MDVVEVAGSWWAQEREDIIMKYEKGHRAGLPEDKGPKPFRSYNNNVDHLGIVHETELPPLTAREAKQIRREISRKSKWVDMLGDWEKYKSSRKLIDRAYKGMPMNIRGPMWSVLLNTEEMKLKNPGRYQIMKEKGKRSSEHIQRIDRDVSGTLRKHIFFRDRYGTKQRELLHILLAYEEYNPEVGYCRDLSHIAALFLLYLPEEDAFWALVQLLASERHSLQGFHSPNGGTVQGLQDQQEHVVATSQPKTMGHQDKKDLCGQCSPLGCLIRILIDGISLGLTLRLWDVYLVEGEQALMPITRIAFKVQQKRLTKTSRCGPWARFCNRFVDTWARDEDTVLKHLRASMKKLTRKQGDLQPPAKPEQGSSASRPVPASRGGKTLCKGDRQAPPGPPARFPRPIWSASPPRAPRSSTPCPGGAVREDTYPVGTQGVPSPALAQGGPQGSWRFLQWNSMPRLPTDLDVEGPWFRHYDFRQSCWVRAISQEDQLAPCWQAEHPAERVRSAFAAPSTDSDQGTPFRARDEQPCAPTSGPCLCGLHLESSQFPPGF.

The Rab-GAP TBC domain maps to 101-293; sequence GMPMNIRGPM…RLWDVYLVEG (193 aa). 2 S-palmitoyl cysteine lipidation sites follow: cysteine 318 and cysteine 325. Positions 350 to 423 are disordered; the sequence is LTRKQGDLQP…TPCPGGAVRE (74 aa). Low complexity predominate over residues 398 to 417; the sequence is PRPIWSASPPRAPRSSTPCP.

Ubiquitinated by a CUL7-based E3 ligase, which leads to proteasomal degradation. Post-translationally, palmitoylation is required for membrane localization and protects TBC1D3 from ubiquitination.

Its subcellular location is the cell membrane. In terms of biological role, acts as a GTPase activating protein for RAB5. Does not act on RAB4 or RAB11. The protein is TBC1 domain family member 3L of Homo sapiens (Human).